Consider the following 586-residue polypeptide: Ferredoxin--nitrite reductase, chloroplastic (586 aa).

Low complexity predominate over residues 1–18; the sequence is MTSFSLTFTSPLLPSSST. The disordered stretch occupies residues 1-20; it reads MTSFSLTFTSPLLPSSSTKP. The transit peptide at 1–25 directs the protein to the chloroplast; the sequence is MTSFSLTFTSPLLPSSSTKPKRSVL. K103 is covalently cross-linked (Glycyl lysine isopeptide (Lys-Gly) (interchain with G-Cter in ubiquitin)). 4 residues coordinate [4Fe-4S] cluster: C464, C470, C505, and C509. C509 contributes to the siroheme binding site.

The protein belongs to the nitrite and sulfite reductase 4Fe-4S domain family. Monomer. The cofactor is siroheme. It depends on [4Fe-4S] cluster as a cofactor.

The protein localises to the plastid. The protein resides in the chloroplast. It catalyses the reaction 6 oxidized [2Fe-2S]-[ferredoxin] + NH4(+) + 2 H2O = nitrite + 6 reduced [2Fe-2S]-[ferredoxin] + 8 H(+). Its pathway is nitrogen metabolism; nitrate reduction (assimilation). Its function is as follows. Catalyzes the six-electron reduction of nitrite to ammonium. The polypeptide is Ferredoxin--nitrite reductase, chloroplastic (NIR1) (Arabidopsis thaliana (Mouse-ear cress)).